A 453-amino-acid chain; its full sequence is Probable acetylornithine aminotransferase, mitochondrial (453 aa).

At Lys-302 the chain carries N6-(pyridoxal phosphate)lysine.

The protein belongs to the class-III pyridoxal-phosphate-dependent aminotransferase family. It depends on pyridoxal 5'-phosphate as a cofactor.

Its subcellular location is the mitochondrion matrix. The catalysed reaction is N(2)-acetyl-L-ornithine + 2-oxoglutarate = N-acetyl-L-glutamate 5-semialdehyde + L-glutamate. It participates in amino-acid biosynthesis; L-arginine biosynthesis; N(2)-acetyl-L-ornithine from L-glutamate: step 4/4. This is Probable acetylornithine aminotransferase, mitochondrial (argD) from Dictyostelium discoideum (Social amoeba).